The sequence spans 3005 residues: Highly reducing polyketide synthase AFT9-1 (3005 aa).

Positions 1–337 (MDPQQRLLLE…GTNAHAILER (337 aa)) constitute a Ketosynthase family 3 (KS3) domain. Active-site for beta-ketoacyl synthase activity residues include Cys-87, His-222, and His-260. The segment at 437-751 (VFTGQGAQWP…SYMSALVRGS (315 aa)) is malonyl-CoA:ACP transacylase (MAT) domain. The segment at 821–936 (HDLLGLKMTD…GSVEVKYAAA (116 aa)) is N-terminal hotdog fold. Positions 821-1114 (HDLLGLKMTD…SGLELRRLAP (294 aa)) are dehydratase (DH) domain. Residues 821-1118 (HDLLGLKMTD…LRRLAPTGQP (298 aa)) enclose the PKS/mFAS DH domain. The active-site Proton acceptor; for dehydratase activity is His-853. Positions 963–1118 (IEKISSQELY…LRRLAPTGQP (156 aa)) are C-terminal hotdog fold. Asp-1028 serves as the catalytic Proton donor; for dehydratase activity. A methyltransferase (CMet) domain region spans residues 1259–1445 (ADDSSKRCYD…MRKASLNMQL (187 aa)). The segment at 1683–1985 (EFMKMPVFTE…QHHRNESTVL (303 aa)) is enoyl reductase (ER) (ER) domain. A ketoreductase (KR) domain region spans residues 2008–2191 (ATYVVSGGRG…YMSLNVGTIE (184 aa)). The region spanning 2293 to 2375 (TRDFEKISQL…SLGAKVASRS (83 aa)) is the Carrier domain. Ser-2335 bears the O-(pantetheine 4'-phosphoryl)serine mark.

It participates in mycotoxin biosynthesis. Functionally, highly reducing polyketide synthase; part of the gene clusters that mediate the biosynthesis of the host-selective toxins (HSTs) AF-toxins responsible for Alternaria black spot of strawberry disease by the strawberry pathotype. AF-toxin I and III are valine derivatives of 2,3-dyhydroxy-isovaleric acid and 2-hydroxy-isovaleric acid respectively, while AF II is an isoleucine derivative of 2-hydroxy-valeric acid. These derivatives are bound to a 9,10-epoxy-8-hydroxy-9-methyl-decatrienoic acid (EDA) moiety. On cellular level, AF-toxins affect plasma membrane of susceptible cells and cause a sudden increase in loss of K(+) after a few minutes of toxin treatment. The aldo-keto reductase AFTS1 catalyzes the conversion of 2-keto-isovaleric acid (2-KIV) to 2-hydroxy-isovaleric acid (2-HIV) by reduction of its ketone to an alcohol. The acyl-CoA ligase AFT1, the hydrolase AFT2 and the enoyl-CoA hydratases AFT3 and AFT6, but also the polyketide synthase AFT9, the acyl-CoA dehydrogenase AFT10, the cytochrome P450 monooxygenase AFT11 and the oxidoreductase AFT12 are all involved in the biosynthesis of the AK-, AF- and ACT-toxin common EDA structural moiety. The exact function of each enzyme, and of additional enzymes identified within the AF-toxin clusters have still to be determined. This Alternaria alternata (Alternaria rot fungus) protein is Highly reducing polyketide synthase AFT9-1.